The sequence spans 158 residues: 2-C-methyl-D-erythritol 2,4-cyclodiphosphate synthase (158 aa).

The a divalent metal cation site is built by Asp-9 and His-11. 4-CDP-2-C-methyl-D-erythritol 2-phosphate contacts are provided by residues 9–11 (DVH) and 35–36 (HS). Residue His-43 coordinates a divalent metal cation. Residues 57 to 59 (DIG), 62 to 66 (FPDTD), 101 to 107 (AQKPKMA), 133 to 136 (TTTE), Phe-140, and Arg-143 contribute to the 4-CDP-2-C-methyl-D-erythritol 2-phosphate site.

It belongs to the IspF family. Homotrimer. The cofactor is a divalent metal cation.

It catalyses the reaction 4-CDP-2-C-methyl-D-erythritol 2-phosphate = 2-C-methyl-D-erythritol 2,4-cyclic diphosphate + CMP. Its pathway is isoprenoid biosynthesis; isopentenyl diphosphate biosynthesis via DXP pathway; isopentenyl diphosphate from 1-deoxy-D-xylulose 5-phosphate: step 4/6. Functionally, involved in the biosynthesis of isopentenyl diphosphate (IPP) and dimethylallyl diphosphate (DMAPP), two major building blocks of isoprenoid compounds. Catalyzes the conversion of 4-diphosphocytidyl-2-C-methyl-D-erythritol 2-phosphate (CDP-ME2P) to 2-C-methyl-D-erythritol 2,4-cyclodiphosphate (ME-CPP) with a corresponding release of cytidine 5-monophosphate (CMP). In Bacillus thuringiensis subsp. konkukian (strain 97-27), this protein is 2-C-methyl-D-erythritol 2,4-cyclodiphosphate synthase.